The sequence spans 473 residues: ATP synthase subunit beta (473 aa).

ATP is bound at residue 158–165 (GGAGVGKT).

Belongs to the ATPase alpha/beta chains family. In terms of assembly, F-type ATPases have 2 components, CF(1) - the catalytic core - and CF(0) - the membrane proton channel. CF(1) has five subunits: alpha(3), beta(3), gamma(1), delta(1), epsilon(1). CF(0) has three main subunits: a(1), b(2) and c(9-12). The alpha and beta chains form an alternating ring which encloses part of the gamma chain. CF(1) is attached to CF(0) by a central stalk formed by the gamma and epsilon chains, while a peripheral stalk is formed by the delta and b chains.

It localises to the cell membrane. The enzyme catalyses ATP + H2O + 4 H(+)(in) = ADP + phosphate + 5 H(+)(out). Functionally, produces ATP from ADP in the presence of a proton gradient across the membrane. The catalytic sites are hosted primarily by the beta subunits. In Geobacillus kaustophilus (strain HTA426), this protein is ATP synthase subunit beta.